The following is a 911-amino-acid chain: MVDYHAANQSYQYGPSSGSNGAGGGGTMGDYMAQEDDWDRDLLLDPAWEKQQRKTFTAWCNSHLRKAGTQIENIDEDFRDGLKLMLLLEVISGERLPKPERGKMRVHKINNVNKALDFIASKGVKLVSIGAEEIVDGNAKMTLGMIWTIILRFAIQDISVEETSAKEGLLLWCQRKTAPYKNVNVQNFHISWKDGLAFNALIHRHRPELIEYDKLRKDDPVTNLNNAFEVAEKYLDIPKMLDAEDIVNTARPDEKAIMTYVSSFYHAFSGAQKAETAANRICKVLAVNQENEHLMEDYERLASDLLEWIRRTIPWLEDRVPQKTIQEMQQKLEDFRDYRRVHKPPKVQEKCQLEINFNTLQTKLRLSNRPAFMPSEGKMVSDINNGWQHLEQAEKGYEEWLLNEIRRLERLDHLAEKFRQKASIHEAWTDGKEAMLKHRDYETATLSDIKALIRKHEAFESDLAAHQDRVEQIAAIAQELNELDYYDSHNVNTRCQKICDQWDALGSLTHSRREALEKTEKQLETIDQLHLEYAKRAAPFNNWMESAMEDLQDMFIVHTIEEIEGLISAHDQFKSTLPDADREREAILAIHKEAQRIAESNHIKLSGSNPYTTVTPQIINSKWEKVQQLVPKRDHALLEEQSKQQSNEHLRRQFASQANIVGPWIQTKMEEIGRISIEMNGTLEDQLSHLKQYERSIVDYKPNLDLLEQQHQLIQEALIFDNKHTNYTMEHIRVGWEQLLTTIARTINEVENQILTRDAKGISQEQMQEFRASFNHFDKDHGGALGPEEFKACLISLGYDVENDRQGDAEFNRIMSVVDPNHSGLVTFQAFIDFMSRETTDTDTADQVIASFKVLAGDKNFITAEELRRELPPDQAEYCIARMAPYQGPDAVPGALDYKSFSTALYGESDL.

An actin-binding region spans residues 1-269 (MVDYHAANQS…YVSSFYHAFS (269 aa)). The disordered stretch occupies residues 8–31 (NQSYQYGPSSGSNGAGGGGTMGDY). The tract at residues 12-26 (QYGPSSGSNGAGGGG) is interaction with VCL. Phosphotyrosine is present on Tyr31. Residues 40–61 (RDLLLDPAWEKQQRKTFTAWCN) are interaction with VCL. 2 Calponin-homology (CH) domains span residues 50–154 (KQQR…LRFA) and 163–269 (TSAK…HAFS). An LXXLL motif motif is present at residues 84–88 (LMLLL). The interval 108 to 126 (KINNVNKALDFIASKGVKL) is interaction with VCL. An N6-acetyllysine modification is found at Lys114. Residues 177-192 (TAPYKNVNVQNFHISW) form a polyphosphoinositide (PIP2)-binding region. Lys214 is modified (N6-acetyllysine). Phosphothreonine is present on Thr249. Spectrin repeat units lie at residues 293–403 (HLME…WLLN), 413–518 (HLAE…ALEK), 528–639 (QLHL…ALLE), and 649–752 (HLRR…EVEN). Residues Lys592 and Lys625 each carry the N6-acetyllysine modification. Phosphoserine is present on Ser696. Residues 736–911 (WEQLLTTIAR…STALYGESDL (176 aa)) form a mediates interaction with MICALL2 region. 2 EF-hand domains span residues 765 to 800 (EQMQEFRASFNHFDKDHGGALGPEEFKACLISLGYD) and 806 to 841 (QGDAEFNRIMSVVDPNHSGLVTFQAFIDFMSRETTD). Asp778 is a binding site for Ca(2+). Lys779 carries the post-translational modification N6-acetyllysine. 2 residues coordinate Ca(2+): Asp780 and Glu789. Lys859 is subject to N6-acetyllysine. Ser909 carries the phosphoserine modification.

It belongs to the alpha-actinin family. In terms of assembly, homodimer; antiparallel. Identified in a IGF2BP1-dependent mRNP granule complex containing untranslated mRNAs. Component of the CART complex, at least composed of ACTN4, HGS/HRS, MYO5B and TRIM3. Binds TRIM3 at the N-terminus. Interacts with MAGI1. Interacts with PDLIM2. Identified in a complex with CASK, IQGAP1, MAGI2, NPHS1, SPTAN1 and SPTBN1. Interacts with MICALL2 (preferentially in opened conformation); stimulated by RAB13 activation. Interacts with PPARG and RARA. Binds to VCL; this interaction triggers VCL conformational changes. Interacts with SEPTIN14. Interacts with IGSF8.

It is found in the nucleus. It localises to the cytoplasm. The protein resides in the cell junction. The protein localises to the cytoskeleton. Its subcellular location is the stress fiber. It is found in the perinuclear region. Its function is as follows. F-actin cross-linking protein which is thought to anchor actin to a variety of intracellular structures. This is a bundling protein. Probably involved in vesicular trafficking via its association with the CART complex. The CART complex is necessary for efficient transferrin receptor recycling but not for EGFR degradation. Involved in tight junction assembly in epithelial cells probably through interaction with MICALL2. Links MICALL2 to the actin cytoskeleton and recruits it to the tight junctions. May also function as a transcriptional coactivator, stimulating transcription mediated by the nuclear hormone receptors PPARG and RARA. Association with IGSF8 regulates the immune synapse formation and is required for efficient T-cell activation. This is Alpha-actinin-4 from Bos taurus (Bovine).